The primary structure comprises 157 residues: Small ribosomal subunit protein uS7 (157 aa).

It belongs to the universal ribosomal protein uS7 family. In terms of assembly, part of the 30S ribosomal subunit. Contacts proteins S9 and S11.

One of the primary rRNA binding proteins, it binds directly to 16S rRNA where it nucleates assembly of the head domain of the 30S subunit. Is located at the subunit interface close to the decoding center, probably blocks exit of the E-site tRNA. In Hydrogenovibrio crunogenus (strain DSM 25203 / XCL-2) (Thiomicrospira crunogena), this protein is Small ribosomal subunit protein uS7.